A 250-amino-acid chain; its full sequence is NAD-dependent protein deacylase (250 aa).

Residues 1-248 (MLGEVSKILA…PKLVEEIRRI (248 aa)) form the Deacetylase sirtuin-type domain. 20-39 (GAGISAESGIPTFRGKDGLW) is an NAD(+) binding site. Substrate contacts are provided by Tyr-64 and Arg-67. Residue 98-101 (QNVD) coordinates NAD(+). His-116 acts as the Proton acceptor in catalysis. Cys-124, Cys-127, Cys-150, and Cys-153 together coordinate Zn(2+). NAD(+)-binding positions include 190 to 192 (GTS), 216 to 218 (NIE), and Ala-234.

Belongs to the sirtuin family. Class III subfamily. The cofactor is Zn(2+).

Its subcellular location is the cytoplasm. The enzyme catalyses N(6)-acetyl-L-lysyl-[protein] + NAD(+) + H2O = 2''-O-acetyl-ADP-D-ribose + nicotinamide + L-lysyl-[protein]. The catalysed reaction is N(6)-succinyl-L-lysyl-[protein] + NAD(+) + H2O = 2''-O-succinyl-ADP-D-ribose + nicotinamide + L-lysyl-[protein]. Its function is as follows. NAD-dependent lysine deacetylase and desuccinylase that specifically removes acetyl and succinyl groups on target proteins. Modulates the activities of several proteins which are inactive in their acylated form. Deacetylates the N-terminal lysine residue of Alba, the major archaeal chromatin protein and that, in turn, increases Alba's DNA binding affinity, thereby repressing transcription. The chain is NAD-dependent protein deacylase from Pyrococcus furiosus (strain ATCC 43587 / DSM 3638 / JCM 8422 / Vc1).